The following is a 219-amino-acid chain: Response regulator ArlR (219 aa).

The region spanning 3–116 is the Response regulatory domain; it reads NILIVEDEQN…ELLARIRAVL (114 aa). A 4-aspartylphosphate modification is found at Asp52. The ompR/PhoB-type DNA-binding region spans 122-219; sequence KDVLDINGII…TVRGVGYVIR (98 aa).

Post-translationally, phosphorylated by ArlS.

It localises to the cytoplasm. Functionally, member of the two-component regulatory system ArlS/ArlR. This is Response regulator ArlR (arlR) from Staphylococcus epidermidis (strain ATCC 12228 / FDA PCI 1200).